Reading from the N-terminus, the 107-residue chain is Thioredoxin-1 (107 aa).

The Thioredoxin domain occupies 2-106 (ASVRTMNDYH…LTNMMAKLVK (105 aa)). Catalysis depends on nucleophile residues C31 and C34. A disulfide bond links C31 and C34.

It belongs to the thioredoxin family. In terms of tissue distribution, ovary specific. Expressed present in the nurse cells from stage 9 of ovary development and is transported into the oocyte. Expressed throughout oogenesis.

Its subcellular location is the nucleus. Its function is as follows. Participates in various redox reactions through the reversible oxidation of its active center dithiol to a disulfide and catalyzes dithiol-disulfide exchange reactions. As a reducing substrate of peroxiredoxin 1, thioredoxin 2 is preferred over thioredoxin 1. Required for female meiosis and early embryonic development. The protein is Thioredoxin-1 (dhd) of Drosophila melanogaster (Fruit fly).